Reading from the N-terminus, the 103-residue chain is Large ribosomal subunit protein bL21 (103 aa).

Belongs to the bacterial ribosomal protein bL21 family. In terms of assembly, part of the 50S ribosomal subunit. Contacts protein L20.

In terms of biological role, this protein binds to 23S rRNA in the presence of protein L20. This is Large ribosomal subunit protein bL21 from Nitrosospira multiformis (strain ATCC 25196 / NCIMB 11849 / C 71).